Consider the following 236-residue polypeptide: tRNA1(Val) (adenine(37)-N6)-methyltransferase (236 aa).

This sequence belongs to the methyltransferase superfamily. tRNA (adenine-N(6)-)-methyltransferase family.

The protein localises to the cytoplasm. It carries out the reaction adenosine(37) in tRNA1(Val) + S-adenosyl-L-methionine = N(6)-methyladenosine(37) in tRNA1(Val) + S-adenosyl-L-homocysteine + H(+). Functionally, specifically methylates the adenine in position 37 of tRNA(1)(Val) (anticodon cmo5UAC). This chain is tRNA1(Val) (adenine(37)-N6)-methyltransferase, found in Histophilus somni (strain 129Pt) (Haemophilus somnus).